The sequence spans 419 residues: Creatine kinase S-type, mitochondrial (419 aa).

The N-terminal 39 residues, 1 to 39 (MASTFSKLLTGRNASLLFATLGTGALTTGYLLNKQNVCA), are a transit peptide targeting the mitochondrion. The interval 40 to 64 (AAREQHKLFPPSADYPDLRKHNNCM) is cardiolipin-binding. Positions 46–132 (KLFPPSADYP…FDPVIKLRHN (87 aa)) constitute a Phosphagen kinase N-terminal domain. Residues 159–401 (YVLSSRVRTG…NYLVDCEKKL (243 aa)) enclose the Phosphagen kinase C-terminal domain. ATP contacts are provided by residues 162-166 (SSRVR) and histidine 225. Phosphotyrosine is present on tyrosine 255. ATP contacts are provided by residues arginine 270, arginine 326, 354–359 (RGTGGV), and aspartate 369. Threonine 356 is modified (phosphothreonine).

This sequence belongs to the ATP:guanido phosphotransferase family. As to quaternary structure, exists as an octamer composed of four CKMT2 homodimers.

The protein resides in the mitochondrion inner membrane. It carries out the reaction creatine + ATP = N-phosphocreatine + ADP + H(+). Its function is as follows. Reversibly catalyzes the transfer of phosphate between ATP and various phosphogens (e.g. creatine phosphate). Creatine kinase isoenzymes play a central role in energy transduction in tissues with large, fluctuating energy demands, such as skeletal muscle, heart, brain and spermatozoa. This is Creatine kinase S-type, mitochondrial (CKMT2) from Bos taurus (Bovine).